The following is a 1097-amino-acid chain: RecBCD enzyme subunit RecC (1097 aa).

The protein belongs to the RecC family. As to quaternary structure, heterotrimer of RecB, RecC and RecD. All subunits contribute to DNA-binding.

Functionally, a helicase/nuclease that prepares dsDNA breaks (DSB) for recombinational DNA repair. Binds to DSBs and unwinds DNA via a highly rapid and processive ATP-dependent bidirectional helicase activity. Holoenzyme degrades any linearized DNA that is unable to undergo homologous recombination. In the holoenzyme this subunit recognizes the wild-type Chi sequence, and when added to isolated RecB increases its ATP-dependent helicase processivity. Unlike the case in E.coli, suppresses RecA-dependent homologous recombination, is instead required for single-strand annealing pathway repair of DSB. The chain is RecBCD enzyme subunit RecC from Mycobacterium tuberculosis (strain ATCC 25618 / H37Rv).